Here is a 156-residue protein sequence, read N- to C-terminus: Small ribosomal subunit protein uS7 (156 aa).

The protein belongs to the universal ribosomal protein uS7 family. Part of the 30S ribosomal subunit. Contacts proteins S9 and S11.

One of the primary rRNA binding proteins, it binds directly to 16S rRNA where it nucleates assembly of the head domain of the 30S subunit. Is located at the subunit interface close to the decoding center, probably blocks exit of the E-site tRNA. The protein is Small ribosomal subunit protein uS7 of Symbiobacterium thermophilum (strain DSM 24528 / JCM 14929 / IAM 14863 / T).